A 145-amino-acid chain; its full sequence is Putative pre-16S rRNA nuclease (145 aa).

This sequence belongs to the YqgF nuclease family.

Its subcellular location is the cytoplasm. Could be a nuclease involved in processing of the 5'-end of pre-16S rRNA. The sequence is that of Putative pre-16S rRNA nuclease from Opitutus terrae (strain DSM 11246 / JCM 15787 / PB90-1).